We begin with the raw amino-acid sequence, 198 residues long: Inositol diphosphatase DSP4 (198 aa).

Residues 1–23 (MTLESYAGDVHTVPQSENSMEER) form a disordered region. The Tyrosine-protein phosphatase domain occupies 34–188 (NFAMVDNGIF…LKHTPLSFSC (155 aa)). The interval 90-102 (FGIERCKEPFVNI) is WPD loop important for active site topology. Asn101 and Ile102 together coordinate 1D-myo-inositol hexakisphosphate. The active-site Phosphocysteine intermediate is Cys126.

This sequence belongs to the protein-tyrosine phosphatase family. Atypical dual-specificity phosphatase Siw14-like subfamily. Highly expressed in flowers and at lower levels in roots, leaves, stems and siliques.

It catalyses the reaction 5-diphospho-1D-myo-inositol 1,2,3,4,6-pentakisphosphate + H2O = 1D-myo-inositol hexakisphosphate + phosphate + H(+). The catalysed reaction is 1,5-bis(diphospho)-1D-myo-inositol 2,3,4,6-tetrakisphosphate + H2O = 1-diphospho-1D-myo-inositol 2,3,4,5,6-pentakisphosphate + phosphate + 2 H(+). It carries out the reaction 3,5-bis(diphospho)-1D-myo-inositol 1,2,4,6-tetrakisphosphate + H2O = 3-diphospho-1D-myo-inositol 1,2,4,5,6-pentakisphosphate + phosphate + 2 H(+). The enzyme catalyses 6-diphospho-1D-myo-inositol pentakisphosphate + H2O = 1D-myo-inositol hexakisphosphate + phosphate + H(+). Its function is as follows. Cleaves the beta-phosphate at the 5-position of soluble inositol pyrophosphates. Has highest activity on 5-diphosphoinositol 1,2,3,4,6-pentakisphosphate (5-InsP(7)), 1,5-bis-diphosphoinositol 2,3,4,6-tetrakisphosphate (1,5-InsP(8)) and 3,5-InsP(8). Acts as a negative regulator of defense responses against the bacterial pathogen Pseudomonas syringae pv tomato strain DC3000. The protein is Inositol diphosphatase DSP4 of Arabidopsis thaliana (Mouse-ear cress).